The following is a 139-amino-acid chain: MDAGKGEYQIAKSDEEWRRELTPEQYGVLRQAGTEQPWTGELLDESRAGVYACAACGAELFRSGTKFDSGCGWPSFYESVRPEAVELLEDTRLGITRTEVRCANCGSHLGHVFPDGFRTPTGDRYCMNSISLDFQPEDE.

Residues 14-137 form the MsrB domain; sequence DEEWRRELTP…NSISLDFQPE (124 aa). Residues cysteine 53, cysteine 56, cysteine 102, and cysteine 105 each coordinate Zn(2+). Cysteine 126 functions as the Nucleophile in the catalytic mechanism.

This sequence belongs to the MsrB Met sulfoxide reductase family. Zn(2+) is required as a cofactor.

The catalysed reaction is L-methionyl-[protein] + [thioredoxin]-disulfide + H2O = L-methionyl-(R)-S-oxide-[protein] + [thioredoxin]-dithiol. In Leifsonia xyli subsp. xyli (strain CTCB07), this protein is Peptide methionine sulfoxide reductase MsrB.